Consider the following 628-residue polypeptide: Phosphomethylpyrimidine synthase (628 aa).

Residues N229, M258, Y287, H323, S343–G345, D384–R387, and E423 each bind substrate. A Zn(2+)-binding site is contributed by H427. Position 450 (Y450) interacts with substrate. Position 491 (H491) interacts with Zn(2+). Residues C571, C574, and C579 each coordinate [4Fe-4S] cluster.

Belongs to the ThiC family. In terms of assembly, homodimer. Requires [4Fe-4S] cluster as cofactor.

The enzyme catalyses 5-amino-1-(5-phospho-beta-D-ribosyl)imidazole + S-adenosyl-L-methionine = 4-amino-2-methyl-5-(phosphooxymethyl)pyrimidine + CO + 5'-deoxyadenosine + formate + L-methionine + 3 H(+). It functions in the pathway cofactor biosynthesis; thiamine diphosphate biosynthesis. Its function is as follows. Catalyzes the synthesis of the hydroxymethylpyrimidine phosphate (HMP-P) moiety of thiamine from aminoimidazole ribotide (AIR) in a radical S-adenosyl-L-methionine (SAM)-dependent reaction. In Variovorax paradoxus (strain S110), this protein is Phosphomethylpyrimidine synthase.